The chain runs to 494 residues: Aspartyl/glutamyl-tRNA(Asn/Gln) amidotransferase subunit B (494 aa).

It belongs to the GatB/GatE family. GatB subfamily. As to quaternary structure, heterotrimer of A, B and C subunits.

The catalysed reaction is L-glutamyl-tRNA(Gln) + L-glutamine + ATP + H2O = L-glutaminyl-tRNA(Gln) + L-glutamate + ADP + phosphate + H(+). It carries out the reaction L-aspartyl-tRNA(Asn) + L-glutamine + ATP + H2O = L-asparaginyl-tRNA(Asn) + L-glutamate + ADP + phosphate + 2 H(+). In terms of biological role, allows the formation of correctly charged Asn-tRNA(Asn) or Gln-tRNA(Gln) through the transamidation of misacylated Asp-tRNA(Asn) or Glu-tRNA(Gln) in organisms which lack either or both of asparaginyl-tRNA or glutaminyl-tRNA synthetases. The reaction takes place in the presence of glutamine and ATP through an activated phospho-Asp-tRNA(Asn) or phospho-Glu-tRNA(Gln). This Rhodopseudomonas palustris (strain BisB18) protein is Aspartyl/glutamyl-tRNA(Asn/Gln) amidotransferase subunit B.